The following is a 361-amino-acid chain: Uroporphyrinogen decarboxylase (361 aa).

Residues 44–48 (RQAGR), aspartate 93, tyrosine 168, serine 223, and histidine 337 contribute to the substrate site.

Belongs to the uroporphyrinogen decarboxylase family. Homodimer.

The protein localises to the cytoplasm. It carries out the reaction uroporphyrinogen III + 4 H(+) = coproporphyrinogen III + 4 CO2. Its pathway is porphyrin-containing compound metabolism; protoporphyrin-IX biosynthesis; coproporphyrinogen-III from 5-aminolevulinate: step 4/4. Its function is as follows. Catalyzes the decarboxylation of four acetate groups of uroporphyrinogen-III to yield coproporphyrinogen-III. In Thermobifida fusca (strain YX), this protein is Uroporphyrinogen decarboxylase.